A 203-amino-acid chain; its full sequence is LexA repressor (203 aa).

A DNA-binding region (H-T-H motif) is located at residues 28 to 48 (VRELCDELGFKSPNTAHFHLK). Residues serine 122 and lysine 159 each act as for autocatalytic cleavage activity in the active site.

It belongs to the peptidase S24 family. Homodimer.

The catalysed reaction is Hydrolysis of Ala-|-Gly bond in repressor LexA.. Represses a number of genes involved in the response to DNA damage (SOS response), including recA and lexA. In the presence of single-stranded DNA, RecA interacts with LexA causing an autocatalytic cleavage which disrupts the DNA-binding part of LexA, leading to derepression of the SOS regulon and eventually DNA repair. In Desulfatibacillum aliphaticivorans, this protein is LexA repressor.